Consider the following 687-residue polypeptide: Chloride channel protein ClC-Ka (687 aa).

4 consecutive transmembrane segments (helical) span residues 52-72 (FLMT…FALG), 161-181 (LFLG…AYLG), 202-222 (VAGA…GVLF), and 236-256 (YWRG…LAVF). Positions 259, 261, 278, and 281 each coordinate Ca(2+). Transmembrane regions (helical) follow at residues 282–302 (IFFF…YLYC), 325–345 (PLYA…PGVG), 396–416 (FTIF…LILA), 417–437 (TTIP…AAIG), 452–472 (IVAG…AGAA), and 486–506 (LLAF…MAVL). Over 507 to 687 (AANAIAQSCQ…SALTNPPPAK (181 aa)) the chain is Cytoplasmic. CBS domains are found at residues 551 to 612 (MRRA…ARAS) and 628 to 686 (TEPV…PPPA).

It belongs to the chloride channel (TC 2.A.49) family. CLCNKA subfamily. Homodimer. Interacts with BSND. In terms of tissue distribution, expressed predominantly in the kidney.

The protein localises to the basolateral cell membrane. The catalysed reaction is chloride(in) = chloride(out). It carries out the reaction bromide(in) = bromide(out). It catalyses the reaction nitrate(in) = nitrate(out). The enzyme catalyses iodide(out) = iodide(in). Functionally, anion-selective channel permeable to small monovalent anions with ion selectivity for chloride &gt; bromide &gt; nitrate &gt; iodide. Forms a homodimeric channel where each subunit has its own ion conduction pathway. May conduct double-barreled currents controlled by two types of gates, two fast gates that control each subunit independently and a slow common gate that opens and shuts off both subunits simultaneously. Assembles with the regulatory subunit BSND/Barttin for sorting at the basolateral plasma membrane domain and functional switch to the ion conducting state. CLCNKA:BSND channels display mostly a linear current-voltage relationship with fast gating at negative potentials. Mediates transepithelial chloride transport from the lumen to interstitial compartment along the thin ascending limb of Henle's loop, contributing to generation of hypertonic medullary interstitium as a countercurrent system to achieve urine concentration. Conducts chloride currents in the stria vascularis of the inner ear to establish the endocochlear potential necessary for normal hearing. The protein is Chloride channel protein ClC-Ka (CLCNKA) of Oryctolagus cuniculus (Rabbit).